Here is a 363-residue protein sequence, read N- to C-terminus: Type 3 secretion system translocon protein SctB (363 aa).

A helical transmembrane segment spans residues 99–120 (ISSLSSNAVSLIISVAVLLSAL).

It belongs to the SctB/SipC family. In terms of assembly, the core secretion machinery of the T3SS is composed of approximately 20 different proteins, including cytoplasmic components, a base, an export apparatus and a needle. This subunit is involved in the formation of a pore, called the translocon, in host membrane.

It localises to the secreted. The protein localises to the host membrane. In terms of biological role, component of the type III secretion system (T3SS), also called injectisome, which is used to inject bacterial effector proteins into eukaryotic host cells. IpaB/SctE and IpaC/SctB are inserted into the host membrane where they form a pore and allow the translocation of effector proteins into the cytosol of target cells. In Shigella dysenteriae, this protein is Type 3 secretion system translocon protein SctB.